A 341-amino-acid polypeptide reads, in one-letter code: Thromboxane A2 receptor (341 aa).

At 1 to 29 (MWPNGTSLGACFRPVNITLQERRAIASPW) the chain is on the extracellular side. N-linked (GlcNAc...) asparagine glycans are attached at residues Asn-4 and Asn-16. A helical transmembrane segment spans residues 30–52 (FAASFCALGLGSNLLALSVLAGA). Residues 53 to 65 (RPGAGPRSSFLAL) are Cytoplasmic-facing. The chain crosses the membrane as a helical span at residues 66–86 (LCGLVLTDFLGLLVTGAIVAS). The Extracellular segment spans residues 87–105 (QHAALLDWRATDPSCRLCY). Cys-104 and Cys-181 form a disulfide bridge. Residues 106–127 (FMGVAMVFFGLCPLLLGAAMAS) form a helical membrane-spanning segment. Residues 128-147 (ERFVGITRPFSRPTATSRRA) are Cytoplasmic-facing. A helical membrane pass occupies residues 148-170 (WATVGLVWVAAGALGLLPLLGLG). At 171–191 (RYSVQYPGSWCFLTLGTQRGD) the chain is on the extracellular side. Residues 192–217 (VVFGLIFALLGSASVGLSLLLNTVSV) traverse the membrane as a helical segment. Over 218–244 (ATLCRVYHTREATQRPRDCEVEMMVQL) the chain is Cytoplasmic. The chain crosses the membrane as a helical span at residues 245-268 (VGIMVVATVCWMPLLVFIMQTLLQ). The Extracellular segment spans residues 269-287 (TPPVMSFSGQLLRATEHQL). The helical transmembrane segment at 288–309 (LIYLRVATWNQILDPWVYILFR) threads the bilayer. The Cytoplasmic segment spans residues 310 to 341 (RSVLRRLHPRFSSQLQAVSLRRPPAQAMLSGP). Ser-328 is subject to Phosphoserine.

Belongs to the G-protein coupled receptor 1 family. In terms of assembly, interacts with RPGRIP1L. Interacts with RACK1; the interaction regulates TBXA2R cell surface expression.

It is found in the cell membrane. Functionally, receptor for thromboxane A2 (TXA2), a potent stimulator of platelet aggregation. The activity of this receptor is mediated by a G-protein that activates a phosphatidylinositol-calcium second messenger system. In the kidney, the binding of TXA2 to glomerular TP receptors causes intense vasoconstriction. Activates phospholipase C and adenylyl cyclase. The polypeptide is Thromboxane A2 receptor (Tbxa2r) (Mus musculus (Mouse)).